Here is a 349-residue protein sequence, read N- to C-terminus: Biotin synthase (349 aa).

Positions 60–287 (GDVELATLLS…KARVRLSAGR (228 aa)) constitute a Radical SAM core domain. The [4Fe-4S] cluster site is built by cysteine 75, cysteine 79, and cysteine 82. [2Fe-2S] cluster contacts are provided by cysteine 119, cysteine 150, cysteine 210, and arginine 282.

The protein belongs to the radical SAM superfamily. Biotin synthase family. As to quaternary structure, homodimer. The cofactor is [4Fe-4S] cluster. It depends on [2Fe-2S] cluster as a cofactor.

It carries out the reaction (4R,5S)-dethiobiotin + (sulfur carrier)-SH + 2 reduced [2Fe-2S]-[ferredoxin] + 2 S-adenosyl-L-methionine = (sulfur carrier)-H + biotin + 2 5'-deoxyadenosine + 2 L-methionine + 2 oxidized [2Fe-2S]-[ferredoxin]. Its pathway is cofactor biosynthesis; biotin biosynthesis; biotin from 7,8-diaminononanoate: step 2/2. In terms of biological role, catalyzes the conversion of dethiobiotin (DTB) to biotin by the insertion of a sulfur atom into dethiobiotin via a radical-based mechanism. The polypeptide is Biotin synthase (Albidiferax ferrireducens (strain ATCC BAA-621 / DSM 15236 / T118) (Rhodoferax ferrireducens)).